Reading from the N-terminus, the 739-residue chain is MSLMLEPNPTQIKEERIYAEMGLTDEEFAMVERILGRLPNYTETGLFSVMWSEHCSYKNSKPVLRKFPTTGERVLQGPGEGAGIVDIGDNQAVVFKMESHNHPSAIEPYQGAATGVGGIIRDVFSMGARPVALLNSLRFGELQSPRVKYLFEEVVAGIAGYGNCIGIPTVGGEVQFDPCYEGNPLVNAMCVGLINHEDIKKGQAHGAGNTVMYVGASTGRDGIHGATFASEELSESSEAKRPAVQVGDPFMEKLLIEACLELIQSDALVGIQDMGAAGLTSSSAEMASKAGMGIEMYLDDVPQRETGMTPYEMMLSESQERMLIVVKKGREQEIVDLFEKYGLAAVTMGKVTEDKMLRLFHKGEKVAEVPADALAEEAPIYHKPSKEAAYFAEFQAMKMETPKVENYKEALFALLQQPTIASKEWVYDQYDYQVRTSTVVTPGSDAAVVRVRGTEKGLAMTTDCNSRYIYLDPEMGGKIAVAEAARNIVCSGGEPLAITDCLNFGNPEKPEIFWQIEKSVDGMSEACRTLQTPVIGGNVSMYNERSGEAVYPTPTVGMVGLVHDLKHVTTQEFKQAGDLVYVIGETKAEFGGSELQKMIHGKIFGQSPSIDLDVELKRQKQVLEAIQAGLVQSAHDVAEGGLAVAISESAIGAKGLGATVKLDGEATAALFAESQSRFVITVKRENKEAFEKAVEAIQVGEVTSTNEVTIHNEENEVLLTANVDEMRKAWKGAIPCLLK.

The active site involves His-54. ATP is bound by residues Tyr-57 and Lys-96. Position 98 (Glu-98) interacts with Mg(2+). Residues 99-102 (SHNH) and Arg-121 contribute to the substrate site. His-100 acts as the Proton acceptor in catalysis. A Mg(2+)-binding site is contributed by Asp-122. Gln-245 is a binding site for substrate. A Mg(2+)-binding site is contributed by Asp-273. 317 to 319 (ESQ) is a substrate binding site. Positions 500 and 537 each coordinate ATP. Residue Asn-538 coordinates Mg(2+). Position 540 (Ser-540) interacts with substrate.

Belongs to the FGAMS family. Monomer. Part of the FGAM synthase complex composed of 1 PurL, 1 PurQ and 2 PurS subunits.

The protein localises to the cytoplasm. It carries out the reaction N(2)-formyl-N(1)-(5-phospho-beta-D-ribosyl)glycinamide + L-glutamine + ATP + H2O = 2-formamido-N(1)-(5-O-phospho-beta-D-ribosyl)acetamidine + L-glutamate + ADP + phosphate + H(+). It functions in the pathway purine metabolism; IMP biosynthesis via de novo pathway; 5-amino-1-(5-phospho-D-ribosyl)imidazole from N(2)-formyl-N(1)-(5-phospho-D-ribosyl)glycinamide: step 1/2. Functionally, part of the phosphoribosylformylglycinamidine synthase complex involved in the purines biosynthetic pathway. Catalyzes the ATP-dependent conversion of formylglycinamide ribonucleotide (FGAR) and glutamine to yield formylglycinamidine ribonucleotide (FGAM) and glutamate. The FGAM synthase complex is composed of three subunits. PurQ produces an ammonia molecule by converting glutamine to glutamate. PurL transfers the ammonia molecule to FGAR to form FGAM in an ATP-dependent manner. PurS interacts with PurQ and PurL and is thought to assist in the transfer of the ammonia molecule from PurQ to PurL. The sequence is that of Phosphoribosylformylglycinamidine synthase subunit PurL from Bacillus cereus (strain G9842).